We begin with the raw amino-acid sequence, 353 residues long: Phosphoribosylformylglycinamidine cyclo-ligase (353 aa).

This sequence belongs to the AIR synthase family.

Its subcellular location is the cytoplasm. The catalysed reaction is 2-formamido-N(1)-(5-O-phospho-beta-D-ribosyl)acetamidine + ATP = 5-amino-1-(5-phospho-beta-D-ribosyl)imidazole + ADP + phosphate + H(+). It participates in purine metabolism; IMP biosynthesis via de novo pathway; 5-amino-1-(5-phospho-D-ribosyl)imidazole from N(2)-formyl-N(1)-(5-phospho-D-ribosyl)glycinamide: step 2/2. The polypeptide is Phosphoribosylformylglycinamidine cyclo-ligase (Pseudomonas aeruginosa (strain LESB58)).